A 1155-amino-acid chain; its full sequence is Alpha,alpha-trehalose-phosphate synthase [UDP-forming] 1 (1155 aa).

A disordered region spans residues 56 to 94 (LQRRRSVSSRGGSLRGSMDSLNDSGQNGAEDVIGVEDEE). The segment covering 63-72 (SSRGGSLRGS) has biased composition (low complexity).

This sequence in the N-terminal section; belongs to the glycosyltransferase 20 family. The protein in the C-terminal section; belongs to the gob-1 trehalose phosphatase family.

It carries out the reaction D-glucose 6-phosphate + UDP-alpha-D-glucose = alpha,alpha-trehalose 6-phosphate + UDP + H(+). Its function is as follows. Catalyzes the production of trehalose from glucose-6-phosphate and UDP-alpha-D-glucose in a 2 step process. This chain is Alpha,alpha-trehalose-phosphate synthase [UDP-forming] 1 (tps-1), found in Aphelenchoides avenae (Mycophagous nematode worm).